We begin with the raw amino-acid sequence, 123 residues long: Small ribosomal subunit protein uS13 (123 aa).

The interval 93-123 is disordered; sequence HRKGLPVRGQNTKNNARTRKGPAKAIAGKKK. Residues 108–123 are compositionally biased toward basic residues; that stretch reads ARTRKGPAKAIAGKKK.

This sequence belongs to the universal ribosomal protein uS13 family. As to quaternary structure, part of the 30S ribosomal subunit. Forms a loose heterodimer with protein S19. Forms two bridges to the 50S subunit in the 70S ribosome.

Located at the top of the head of the 30S subunit, it contacts several helices of the 16S rRNA. In the 70S ribosome it contacts the 23S rRNA (bridge B1a) and protein L5 of the 50S subunit (bridge B1b), connecting the 2 subunits; these bridges are implicated in subunit movement. Contacts the tRNAs in the A and P-sites. The chain is Small ribosomal subunit protein uS13 from Leuconostoc citreum (strain KM20).